Here is a 110-residue protein sequence, read N- to C-terminus: uncharacterized protein (110 aa).

Residues 16–46 (ELDKLRECEERLSVIEKQKQSSKQESEETYI) adopt a coiled-coil conformation. Residues 85–96 (EEKDKKCQRKPE) show a composition bias toward basic and acidic residues. A disordered region spans residues 85 to 110 (EEKDKKCQRKPEAPSTPAVTIRSKRQ).

This is an uncharacterized protein from Bacillus subtilis (strain 168).